We begin with the raw amino-acid sequence, 138 residues long: Small ribosomal subunit protein uS8 (138 aa).

This sequence belongs to the universal ribosomal protein uS8 family. In terms of assembly, part of the 30S ribosomal subunit. Contacts proteins S5 and S12.

One of the primary rRNA binding proteins, it binds directly to 16S rRNA central domain where it helps coordinate assembly of the platform of the 30S subunit. In Thermus aquaticus, this protein is Small ribosomal subunit protein uS8.